Consider the following 107-residue polypeptide: Envelope small membrane protein (107 aa).

At 1-11 (MMNLVNKSLEE) the chain is on the virion surface side. The helical transmembrane segment at 12-32 (NGSFLTAVYIFCAFVALYLLG) threads the bilayer. Over 33–107 (RALHAFVQAA…NFQNDGKLHS (75 aa)) the chain is Intravirion.

This sequence belongs to the gammacoronaviruses E protein family. As to quaternary structure, homooligomer. Interacts with the M membrane protein in the budding compartment of the host cell, which is located between endoplasmic reticulum and the Golgi complex. The cytoplasmic tails of both proteins are important for this function. Interacts with Nucleoprotein.

It is found in the host Golgi apparatus membrane. Plays a central role in virus morphogenesis and assembly. Acts as a viroporin and self-assembles in host membranes forming pentameric protein-lipid pores that allow ion transport. Also plays a role in the induction of apoptosis. The sequence is that of Envelope small membrane protein from Gallus gallus (Chicken).